The following is a 153-amino-acid chain: Interleukin-4 (153 aa).

Positions 1–24 (MGLTSQLLPPLFFLLACAGNFAHG) are cleaved as a signal peptide. 3 cysteine pairs are disulfide-bonded: cysteine 27/cysteine 151, cysteine 48/cysteine 89, and cysteine 70/cysteine 123. An N-linked (GlcNAc...) asparagine glycan is attached at asparagine 62. An N-linked (GlcNAc...) asparagine glycan is attached at asparagine 129.

The protein belongs to the IL-4/IL-13 family.

Its subcellular location is the secreted. In terms of biological role, participates in at least several B-cell activation processes as well as of other cell types. It is a costimulator of DNA-synthesis. It induces the expression of class II MHC molecules on resting B-cells. It enhances both secretion and cell surface expression of IgE and IgG1. It also regulates the expression of the low affinity Fc receptor for IgE (CD23) on both lymphocytes and monocytes. Positively regulates IL31RA expression in macrophages. Stimulates autophagy in dendritic cells by interfering with mTORC1 signaling and through the induction of RUFY4. The sequence is that of Interleukin-4 (IL4) from Macaca mulatta (Rhesus macaque).